We begin with the raw amino-acid sequence, 1262 residues long: Clustered mitochondria protein homolog (1262 aa).

Positions 1–47 (MTSGSELKAEVDAPVVNGKDELVHEEDNNDSGHSSINTPDASEDKQT) are disordered. A compositionally biased stretch (polar residues) spans 31–40 (SGHSSINTPD). The Clu domain maps to 335 to 580 (AIELIEPFRV…RSMPPDVHYL (246 aa)).

The protein belongs to the CLU family.

It is found in the cytoplasm. Functionally, mRNA-binding protein involved in proper cytoplasmic distribution of mitochondria. In Caenorhabditis briggsae, this protein is Clustered mitochondria protein homolog.